Reading from the N-terminus, the 676-residue chain is Solute carrier family 26 member 10 (676 aa).

The disordered stretch occupies residues 1 to 24 (MSGPLASGTCSDPEEVSDLKSPLS). 11 helical membrane-spanning segments follow: residues 101 to 121 (AVAG…FALL), 124 to 144 (VPPV…SLLG), 149 to 165 (LSTG…GSVV), 190 to 210 (VGAA…MFVL), 226 to 246 (ALTS…LLGL), 267 to 287 (ALSQ…VLLV), 300 to 320 (LLTP…LCFT), 353 to 373 (ILAD…SLAS), 398 to 418 (ISSL…SLLV), 426 to 446 (LAGL…RPFF), and 487 to 507 (IVTW…VGVV). Residues 539–660 (ESRKLLQVPG…VSVQDAAAHA (122 aa)) form the STAS domain.

This sequence belongs to the SLC26A/SulP transporter (TC 2.A.53) family.

The protein resides in the membrane. In terms of biological role, chloride/bicarbonate exchanger. This chain is Solute carrier family 26 member 10 (Slc26a10), found in Mus musculus (Mouse).